The chain runs to 248 residues: Transcription factor Spi-C (248 aa).

A DNA-binding region (ETS) is located at residues 111-194 (LRLFEYLHES…IRRKLTYQFS (84 aa)).

The protein belongs to the ETS family. Binds DNA as a monomer.

It is found in the nucleus. Controls the development of red pulp macrophages required for red blood cells recycling and iron homeostasis. Transcription factor that binds to the PU-box, a purine-rich DNA sequence (5'-GAGGA[AT]-3') that can act as a lymphoid-specific enhancer. Regulates VCAM1 gene expression. The chain is Transcription factor Spi-C (SPIC) from Bos taurus (Bovine).